Reading from the N-terminus, the 129-residue chain is Large ribosomal subunit protein bL17 (129 aa).

Belongs to the bacterial ribosomal protein bL17 family. In terms of assembly, part of the 50S ribosomal subunit. Contacts protein L32.

The chain is Large ribosomal subunit protein bL17 from Pseudomonas aeruginosa (strain UCBPP-PA14).